The chain runs to 344 residues: Trace amine-associated receptor 8c (344 aa).

Residues 1–31 lie on the Extracellular side of the membrane; it reads MTSNFSQPALQLCYENTNGSCIKTPYSPGPR. Residues Asn-4 and Asn-18 are each glycosylated (N-linked (GlcNAc...) asparagine). 2 cysteine pairs are disulfide-bonded: Cys-21-Cys-185 and Cys-104-Cys-189. The chain crosses the membrane as a helical span at residues 32-52; sequence VILYMVYGFGAVLAVCGNLLV. At 53 to 67 the chain is on the cytoplasmic side; the sequence is VISVLHFKQLHSPAN. The chain crosses the membrane as a helical span at residues 68–88; the sequence is FLIASLASADFLVGISVMPFS. Topologically, residues 89 to 111 are extracellular; it reads MVRSIESCWYFGDAFCSLHSCCD. A helical membrane pass occupies residues 112–132; that stretch reads VAFCYSSALHLCFISVDRYIA. Residues 133–146 lie on the Cytoplasmic side of the membrane; the sequence is VTDPLVYPTKFTVS. Residues 147–167 form a helical membrane-spanning segment; sequence VSGICISISWILPLVYSSAVF. The Extracellular segment spans residues 168–195; that stretch reads YTGISAKGIESLVSALNCVGGCQVVVNQ. A helical transmembrane segment spans residues 196-216; the sequence is DWVLISFLLFFIPTVVMIILY. Over 217–260 the chain is Cytoplasmic; that stretch reads SKIFLVAKQQAVKIETSVSGNRGESSSESHKARVAKRERKAAKT. The chain crosses the membrane as a helical span at residues 261 to 281; that stretch reads LGVTVVAFMVSWLPYTIDALV. Residue Asp-282 is a topological domain, extracellular. Residues 283–303 form a helical membrane-spanning segment; that stretch reads AFMGFITPAYVYEICCWSAYY. Residues 304–344 lie on the Cytoplasmic side of the membrane; that stretch reads NSAMNPLIYAFFYPWFRKAIKLILSGKILKGHSSTTNLFSE.

This sequence belongs to the G-protein coupled receptor 1 family. Specifically expressed in neurons of the olfactory epithelium.

The protein localises to the cell membrane. Its function is as follows. Olfactory receptor specific for trace amines, such ascyclohexylamine (1-MPD). Trace amine compounds are enriched in animal body fluids and act on trace amine-associated receptors (TAARs) to elicit both intraspecific and interspecific innate behaviors. Ligand-binding causes a conformation change that triggers signaling via G(s)-class of G alpha proteins (GNAL or GNAS). This is Trace amine-associated receptor 8c from Mus musculus (Mouse).